The chain runs to 115 residues: ATP synthase subunit g, mitochondrial (115 aa).

Met1 is modified (N-acetylmethionine). 2 positions are modified to phosphoserine: Ser3 and Ser62.

It belongs to the ATPase g subunit family. As to quaternary structure, F-type ATPases have 2 components, CF(1) - the catalytic core - and CF(0) - the membrane proton channel. In yeast, the dimeric form of ATP synthase consists of 17 polypeptides: alpha, beta, gamma, delta, epsilon, 4 (B), 5 (OSCP), 6 (A), 8, 9 (C), d, E (Tim11), f, g, h, i/j and k. Phosphorylation on Ser-62 impairs ATP synthase dimerization.

Its subcellular location is the mitochondrion membrane. In terms of biological role, mitochondrial membrane ATP synthase (F(1)F(0) ATP synthase or Complex V) produces ATP from ADP in the presence of a proton gradient across the membrane which is generated by electron transport complexes of the respiratory chain. F-type ATPases consist of two structural domains, F(1) - containing the extramembraneous catalytic core, and F(0) - containing the membrane proton channel, linked together by a central stalk and a peripheral stalk. During catalysis, ATP synthesis in the catalytic domain of F(1) is coupled via a rotary mechanism of the central stalk subunits to proton translocation. Part of the complex F(0) domain. Minor subunit located with subunit a in the membrane. The polypeptide is ATP synthase subunit g, mitochondrial (ATP20) (Saccharomyces cerevisiae (strain ATCC 204508 / S288c) (Baker's yeast)).